The primary structure comprises 1182 residues: IQ motif and SEC7 domain-containing protein 3 (1182 aa).

The stretch at 20–56 (AIVQNQQSLIHTQRERIDELERRLDELSAENRSLWEH) forms a coiled coil. 2 disordered regions span residues 62-157 (AQPP…ERPP) and 230-275 (AAGR…RQQP). Residues 63–78 (QPPPGLVPPSSAPLPA) show a composition bias toward pro residues. Low complexity-rich tracts occupy residues 79–105 (APAT…AAAP) and 254–263 (GAGAASPRAG). Phosphoserine is present on Ser259. Positions 315–344 (SRRAACTIQTAFRQYQLSKNFEKIRNSLLE) constitute an IQ domain. Disordered stretches follow at residues 444-479 (AGPP…AHSG) and 521-616 (EPAA…ASAS). Basic and acidic residues predominate over residues 533–548 (SGREAPEAPAVGREDA). Residues 555–569 (AEAAASGAADGATAP) are compositionally biased toward low complexity. A compositionally biased stretch (acidic residues) spans 572–581 (EEEEEEEETA). Low complexity predominate over residues 598 to 616 (SSSSTSTKSAKSGSEASAS). Residues 644–837 (TLSTDTLRKR…VGIYERIQQK (194 aa)) enclose the SEC7 domain. One can recognise a PH domain in the interval 850 to 983 (TKVEKSIVGM…LKESIAEVTE (134 aa)). The stretch at 964-992 (SDEMQKFVEDLKESIAEVTELEQIRIEWE) forms a coiled coil. Disordered stretches follow at residues 1002-1090 (LSFK…PGTL) and 1121-1182 (YTSS…RSLV). Residues 1022–1033 (AKREAALRERPA) show a composition bias toward basic and acidic residues. Polar residues predominate over residues 1043–1052 (NRLQTSQHNS). Over residues 1061-1087 (PVPPPDLQPSPPRQQTPPLPPPPPTPP) the composition is skewed to pro residues. Positions 1121 to 1132 (YTSSSSDSCGST) are enriched in low complexity. Pro residues predominate over residues 1147–1157 (PPLPPPPPPYN).

The protein belongs to the BRAG family. In terms of assembly, interacts with DLG1 and DLG4. Interacts with GPHN. In terms of tissue distribution, expressed specifically in the adult brain, predominantly in the cerebral cortex and the olfactory bulb, but not in the fetal brain. Expressed only in mature neurons, but not in undifferentiated neural stem precursor cells (NSPCs), nor in glioma cells.

It is found in the cytoplasm. The protein localises to the postsynaptic density. Acts as a guanine nucleotide exchange factor (GEF) for ARF1. The protein is IQ motif and SEC7 domain-containing protein 3 (IQSEC3) of Homo sapiens (Human).